Reading from the N-terminus, the 635-residue chain is Biosynthetic arginine decarboxylase (635 aa).

Lysine 100 is subject to N6-(pyridoxal phosphate)lysine. 282 to 292 is a binding site for substrate; sequence IDIGGGLGVDY.

Belongs to the Orn/Lys/Arg decarboxylase class-II family. SpeA subfamily. It depends on Mg(2+) as a cofactor. Pyridoxal 5'-phosphate serves as cofactor.

It catalyses the reaction L-arginine + H(+) = agmatine + CO2. It functions in the pathway amine and polyamine biosynthesis; agmatine biosynthesis; agmatine from L-arginine: step 1/1. In terms of biological role, catalyzes the biosynthesis of agmatine from arginine. The sequence is that of Biosynthetic arginine decarboxylase from Pelobacter propionicus (strain DSM 2379 / NBRC 103807 / OttBd1).